Here is a 385-residue protein sequence, read N- to C-terminus: Serine/threonine-protein kinase 52 (385 aa).

The Protein kinase domain maps to 82-356 (LIIKTVLARG…PEMDEVVPML (275 aa)). Residues 88-96 (LARGTFGTV) and lysine 109 each bind ATP. Aspartate 227 acts as the Proton acceptor in catalysis.

The protein belongs to the protein kinase superfamily. Ser/Thr protein kinase family. As to quaternary structure, binds to CBC1. Associates with PHOT1, PHOT2, BLUS1 and PM H(+)-ATPase (e.g. AHA1). Autophosphorylated. Phosphorylated by HT1 in response to low CO(2) concentrations. In terms of tissue distribution, expressed in guard cells.

It localises to the cytoplasm. It is found in the cytosol. It carries out the reaction L-seryl-[protein] + ATP = O-phospho-L-seryl-[protein] + ADP + H(+). The enzyme catalyses L-threonyl-[protein] + ATP = O-phospho-L-threonyl-[protein] + ADP + H(+). In terms of biological role, serine/threonine protein kinase that phosphorylates proteins on serine and threonine residues. Collectively with CBC1, acts as a negative regulator of stomatal opening, probably via the inhibition of plasma membrane-type ATPases (AHA1 and AHA2) activity in guard cells, but in an abscisic acid (ABA)-independent manner. However, at low concentrations of CO(2), together with CBC1, stimulates stomatal opening via the inhibition of S-type anion channels in response to blue light (BL) and red light (RL), thus being a key component to maximize photosynthesis in the light under low CO(2) conditions. Required for temperature decrease in leaves. Downstream target of HIGH LEAF TEMPERATURE1 (HT1) during low CO(2)-induced stomatal opening. The polypeptide is Serine/threonine-protein kinase 52 (Arabidopsis thaliana (Mouse-ear cress)).